The following is a 727-amino-acid chain: Polyphosphate kinase (727 aa).

Asparagine 82 contacts ATP. Positions 412 and 442 each coordinate Mg(2+). The active-site Phosphohistidine intermediate is histidine 472. The ATP site is built by tyrosine 505, arginine 601, and histidine 629.

Belongs to the polyphosphate kinase 1 (PPK1) family. Requires Mg(2+) as cofactor. An intermediate of this reaction is the autophosphorylated ppk in which a phosphate is covalently linked to a histidine residue through a N-P bond.

It catalyses the reaction [phosphate](n) + ATP = [phosphate](n+1) + ADP. Functionally, catalyzes the reversible transfer of the terminal phosphate of ATP to form a long-chain polyphosphate (polyP). The sequence is that of Polyphosphate kinase from Pseudomonas putida (strain ATCC 47054 / DSM 6125 / CFBP 8728 / NCIMB 11950 / KT2440).